The primary structure comprises 104 residues: Large ribosomal subunit protein uL24 (104 aa).

Belongs to the universal ribosomal protein uL24 family. As to quaternary structure, part of the 50S ribosomal subunit.

Its function is as follows. One of two assembly initiator proteins, it binds directly to the 5'-end of the 23S rRNA, where it nucleates assembly of the 50S subunit. Functionally, one of the proteins that surrounds the polypeptide exit tunnel on the outside of the subunit. In Salmonella paratyphi A (strain ATCC 9150 / SARB42), this protein is Large ribosomal subunit protein uL24.